Consider the following 111-residue polypeptide: WAP four-disulfide core domain protein 12 (111 aa).

Positions 1-23 (MGSSSFLVLMVSLTLVTLVAVEG) are cleaved as a signal peptide. Residues 27–74 (DIEKAGVCPADNVRCFKSDPPQCHTDQDCLGERKCCYLHCGFKCVIPV) form the WAP domain. Cystine bridges form between C34–C62, C41–C66, C49–C61, and C55–C70. Residues 80-111 (GGNKDEDVSRPYPEPGWEAKCPGSSSTRCPQK) form a disordered region. Residues 102–111 (GSSSTRCPQK) show a composition bias toward polar residues.

It is found in the secreted. In terms of biological role, antibacterial protein. Putative acid-stable proteinase inhibitor. The sequence is that of WAP four-disulfide core domain protein 12 (WFDC12) from Pan troglodytes (Chimpanzee).